The sequence spans 149 residues: Large ribosomal subunit protein bL9 (149 aa).

It belongs to the bacterial ribosomal protein bL9 family.

Its function is as follows. Binds to the 23S rRNA. This Legionella pneumophila (strain Paris) protein is Large ribosomal subunit protein bL9.